Consider the following 500-residue polypeptide: Probable cytosol aminopeptidase (500 aa).

The Mn(2+) site is built by K268 and D273. Residue K280 is part of the active site. Positions 291, 350, and 352 each coordinate Mn(2+). R354 is a catalytic residue.

Belongs to the peptidase M17 family. Mn(2+) is required as a cofactor.

The protein localises to the cytoplasm. The catalysed reaction is Release of an N-terminal amino acid, Xaa-|-Yaa-, in which Xaa is preferably Leu, but may be other amino acids including Pro although not Arg or Lys, and Yaa may be Pro. Amino acid amides and methyl esters are also readily hydrolyzed, but rates on arylamides are exceedingly low.. It catalyses the reaction Release of an N-terminal amino acid, preferentially leucine, but not glutamic or aspartic acids.. In terms of biological role, presumably involved in the processing and regular turnover of intracellular proteins. Catalyzes the removal of unsubstituted N-terminal amino acids from various peptides. This Alkaliphilus metalliredigens (strain QYMF) protein is Probable cytosol aminopeptidase.